A 1312-amino-acid chain; its full sequence is MGTTTMGVKLDDATRERIKSAASRIDRTPHWLIKQAIFNYLEKLENDETLPELPALLSGAANESDDASEPTEEPYQPFLEFAEQILPQSVRRAAITAAWRRPETDAVPMLLEQARLPQPLGEQAHKLAYQLAEKLRNQKTASGRAGMVQSLLQEFSLSSQEGVALMCLAEALLRIPDKATRDALIRDKISNGNWQSHIGRSPSLFVNAATWGLLFTGKLVSTHNETSLSRSLNRIIGKSGEPLIRKGVDMAMRLMGEQFVTGETIAEALANARKLEEKGFRYSYDMLGEAALTAADAQAYMVSYQQAIHAIGKASNGRGIYEGPGISIKLSALHPRYSRAQYDRVMEELYPRLKSLTLLARQYDIGINIDAEEADRLEISLDLLEKLCFEPELAGWNGIGFVIQAYQKRCPFVIDYLIDLATRSRRRLMIRLVKGAYWDSEIKRAQMEGLEGYPVYTRKVYTDVSYLACAKKLLAVPNLIYPQFATHNAHTLAAIYQLAGQNYYPGQYEFQCLHGMGEPLYEQVVGKVADGKLNRPCRIYAPVGTHETLLAYLVRRLLENGANTSFVNRIADNTLPLDELVADPVSAVEKLAQQEGQAGLPHPKIPLPRDLYGSGRSNSAGLDLANEHRLASLSSSLLNSALHKWQALPMLEQPVAEGEMQPVVNPAEPKDIVGYVREASDAEVQQALTSAINNAPIWFATPPQERAAILERAAVLMESQMPTLMGILVREAGKTFSNAIAEVREAVDFLHYYAGQVRDDFDNETHRPLGPVVCISPWNFPLAIFTGQIAAALAAGNSVLAKPAEQTPLIAAQGVAILLEAGVPPGVIQLLPGRGETVGAALTSDERVRGVMFTGSTEVATLLQRNIASRLDPQGRPTPLIAETGGMNAMIVDSSALTEQVVIDVLASAFDSAGQRCSALRVLCLQEEVADHTLTMLRGAMSECRMGNPGRLTTDIGPVIDAEAKENIERHIQAMRAKGRTVYQAVRENSEDAREWRHGTFVPPTLIELDSFDELKKEVFGPVLHVVRYNRNELDKLVEQINASGYGLTLGVHTRIDETIAQVTGSAKVGNLYVNRNMVGAVVGVQPFGGEGLSGTGPKAGGPLYLYRLLSSRPQDAVGVTFARQDAERPLDAQLKTLLEKPLQALQQWAAGRPELQALCQQYSEQAQSGTQRLLPGPTGERNTLTLMPRERVLCVADNEQDALIQLAAVLAVGCEVLWPDSALQRDLAKKLPREVSERIRFAKAEQLPVQAFDAVIYHGDSDQLRELCEQVAARDGAIVSVQGFARGETNLLLERLYIERSLSVNTAAAGA.

Positions 228–574 (LSRSLNRIIG…SFVNRIADNT (347 aa)) are proline dehydrogenase. The tract at residues 653-1119 (QPVAEGEMQP…LSSRPQDAVG (467 aa)) is aldehyde dehydrogenase. Residues Glu883 and Cys917 contribute to the active site.

In the N-terminal section; belongs to the proline dehydrogenase family. The protein in the C-terminal section; belongs to the aldehyde dehydrogenase family. It depends on FAD as a cofactor.

The enzyme catalyses L-proline + a quinone = (S)-1-pyrroline-5-carboxylate + a quinol + H(+). The catalysed reaction is L-glutamate 5-semialdehyde + NAD(+) + H2O = L-glutamate + NADH + 2 H(+). The protein operates within amino-acid degradation; L-proline degradation into L-glutamate; L-glutamate from L-proline: step 1/2. It functions in the pathway amino-acid degradation; L-proline degradation into L-glutamate; L-glutamate from L-proline: step 2/2. Functionally, oxidizes proline to glutamate for use as a carbon and nitrogen source and also function as a transcriptional repressor of the put operon. The chain is Bifunctional protein PutA (putA) from Klebsiella aerogenes (Enterobacter aerogenes).